The following is a 447-amino-acid chain: 23S rRNA (uracil(1939)-C(5))-methyltransferase RlmD (447 aa).

In terms of domain architecture, TRAM spans 7-66 (RKPLSQEPQKASIEALTHEGRGIAHVAGKTVFIDGALPGETVWFHYLRRRGKFDEGRVLE). Residues Cys-79, Cys-85, Cys-88, and Cys-168 each coordinate [4Fe-4S] cluster. The S-adenosyl-L-methionine site is built by Gln-275, Phe-304, Asn-309, Glu-325, Asp-352, and Asp-374. Cys-400 (nucleophile) is an active-site residue.

This sequence belongs to the class I-like SAM-binding methyltransferase superfamily. RNA M5U methyltransferase family. RlmD subfamily.

It carries out the reaction uridine(1939) in 23S rRNA + S-adenosyl-L-methionine = 5-methyluridine(1939) in 23S rRNA + S-adenosyl-L-homocysteine + H(+). Catalyzes the formation of 5-methyl-uridine at position 1939 (m5U1939) in 23S rRNA. In Nitrosococcus oceani (strain ATCC 19707 / BCRC 17464 / JCM 30415 / NCIMB 11848 / C-107), this protein is 23S rRNA (uracil(1939)-C(5))-methyltransferase RlmD.